The chain runs to 607 residues: Thymidine kinase (607 aa).

Disordered regions lie at residues 1 to 160 (MAGF…ADST) and 180 to 215 (DDKS…PSGL). The segment covering 17–32 (KCQEDESPENERHENF) has biased composition (basic and acidic residues). Composition is skewed to polar residues over residues 88–106 (AAVT…TSCP), 148–160 (RKTS…ADST), and 194–203 (RRPSSHSALK). An ATP-binding site is contributed by 291-298 (GAPGVGKT). Glu-317 acts as the Proton acceptor in catalysis. Position 355 (Gln-355) interacts with substrate. Arg-445 provides a ligand contact to ATP. Arg-451 contacts substrate.

This sequence belongs to the herpesviridae thymidine kinase family. In terms of assembly, homodimer.

Its subcellular location is the virion tegument. It is found in the host nucleus. It catalyses the reaction thymidine + ATP = dTMP + ADP + H(+). Its function is as follows. Catalyzes the transfer of the gamma-phospho group of ATP to thymidine to generate dTMP in the salvage pathway of pyrimidine synthesis. The dTMP serves as a substrate for DNA polymerase during viral DNA replication. Allows the virus to be reactivated and to grow in non-proliferative cells lacking a high concentration of phosphorylated nucleic acid precursors. The sequence is that of Thymidine kinase from Homo sapiens (Human).